Consider the following 183-residue polypeptide: MKVLAVTGYKPFELGIFKHDDKALFYIKKALENRMIALLEEGLEWVLISGQLGTELWAAEVAFSLQEEFPDLKVAVITPFLEQEKKWSEKNQEQYEAVLAASDFTESLTHRPYESPVQFKQKNRFFIEKADGLLILYDEEIEGSPVYMLNEAKKAQEKRDFPIYTITMDDLRVTVEECSFYEE.

The protein belongs to the UPF0398 family.

This is UPF0398 protein BLi02355/BL05236 from Bacillus licheniformis (strain ATCC 14580 / DSM 13 / JCM 2505 / CCUG 7422 / NBRC 12200 / NCIMB 9375 / NCTC 10341 / NRRL NRS-1264 / Gibson 46).